The chain runs to 185 residues: Intraflagellar transport protein 22 homolog (185 aa).

Residues 10–17, 63–67, and 123–126 contribute to the GTP site; these read GPCESGKT, DCGGD, and HKPG. Ser-137 is subject to Phosphoserine.

The protein belongs to the small GTPase superfamily. Rab family. In terms of assembly, component of the IFT complex B, at least composed of IFT20, IFT22, IFT25, IFT27, IFT46, IFT52, TRAF3IP1/IFT54, IFT57, IFT74, IFT80, IFT81, and IFT88. Interacts with IFT88. Interacts with CFAP61.

The protein localises to the cell projection. It localises to the cilium. In terms of biological role, small GTPase-like component of the intraflagellar transport (IFT) complex B. The chain is Intraflagellar transport protein 22 homolog (Ift22) from Mus musculus (Mouse).